Here is a 392-residue protein sequence, read N- to C-terminus: Galactokinase (392 aa).

37 to 40 contacts substrate; the sequence is EHTD. Residues Ser-71 and 128–134 contribute to the ATP site; that span reads GSGLSSS. Mg(2+)-binding residues include Ser-134 and Glu-166. Asp-178 serves as the catalytic Proton acceptor. Tyr-228 serves as a coordination point for substrate.

Belongs to the GHMP kinase family. GalK subfamily.

The protein localises to the cytoplasm. It catalyses the reaction alpha-D-galactose + ATP = alpha-D-galactose 1-phosphate + ADP + H(+). It participates in carbohydrate metabolism; galactose metabolism. Functionally, catalyzes the transfer of the gamma-phosphate of ATP to D-galactose to form alpha-D-galactose-1-phosphate (Gal-1-P). In Streptococcus pneumoniae (strain ATCC BAA-255 / R6), this protein is Galactokinase.